Consider the following 119-residue polypeptide: Large ribosomal subunit protein uL22 (119 aa).

This sequence belongs to the universal ribosomal protein uL22 family. As to quaternary structure, part of the 50S ribosomal subunit.

Its function is as follows. This protein binds specifically to 23S rRNA; its binding is stimulated by other ribosomal proteins, e.g. L4, L17, and L20. It is important during the early stages of 50S assembly. It makes multiple contacts with different domains of the 23S rRNA in the assembled 50S subunit and ribosome. Functionally, the globular domain of the protein is located near the polypeptide exit tunnel on the outside of the subunit, while an extended beta-hairpin is found that lines the wall of the exit tunnel in the center of the 70S ribosome. The chain is Large ribosomal subunit protein uL22 from Rickettsia typhi (strain ATCC VR-144 / Wilmington).